A 1454-amino-acid chain; its full sequence is Receptor-type tyrosine-protein phosphatase T (1454 aa).

Residues methionine 1–alanine 29 form the signal peptide. At glutamine 30–methionine 770 the chain is on the extracellular side. The region spanning glycine 34–lysine 195 is the MAM domain. N-linked (GlcNAc...) asparagine glycans are attached at residues asparagine 82, asparagine 102, asparagine 141, and asparagine 212. Residues proline 197–isoleucine 288 form the Ig-like C2-type domain. Cysteine 217 and cysteine 271 are oxidised to a cystine. Fibronectin type-III domains lie at proline 295–alanine 388, glycine 393–aspartate 487, and valine 488–serine 594. N-linked (GlcNAc...) asparagine glycans are attached at residues asparagine 425, asparagine 514, asparagine 551, asparagine 605, asparagine 658, and asparagine 688. Positions alanine 670–threonine 767 constitute a Fibronectin type-III 4 domain. A helical transmembrane segment spans residues alanine 771–isoleucine 791. Over lysine 792–phenylalanine 1454 the chain is Cytoplasmic. Positions glutamine 800–serine 852 are disordered. Residues leucine 824–asparagine 841 are compositionally biased toward polar residues. Tyrosine-protein phosphatase domains lie at phenylalanine 902–alanine 1156 and isoleucine 1188–tyrosine 1450. Substrate is bound by residues aspartate 1065, cysteine 1097 to arginine 1103, and glutamine 1141. Cysteine 1097 serves as the catalytic Phosphocysteine intermediate. Residue serine 1221 is modified to Phosphoserine. The active-site Phosphocysteine intermediate is the cysteine 1391.

This sequence belongs to the protein-tyrosine phosphatase family. Receptor class 2B subfamily. As to expression, expression is restricted to the CNS. Distributed throughout the brain and spinal cord.

Its subcellular location is the membrane. It catalyses the reaction O-phospho-L-tyrosyl-[protein] + H2O = L-tyrosyl-[protein] + phosphate. May be involved in both signal transduction and cellular adhesion in the CNS. May have specific signaling roles in the tyrosine phosphorylation/dephosphorylation pathway in the anterior compartment of the adult cerebellar cortex. The sequence is that of Receptor-type tyrosine-protein phosphatase T (Ptprt) from Mus musculus (Mouse).